We begin with the raw amino-acid sequence, 1003 residues long: Glycine--tRNA ligase (1003 aa).

The interval 1 to 310 is glycine--tRNA ligase alpha subunit; the sequence is MSSQPLTLQD…VTAKQIPHIC (310 aa). The interval 311-1003 is glycine--tRNA ligase beta subunit; it reads QDEDFLLEIG…CFGFYAWDAL (693 aa).

The protein belongs to the class-II aminoacyl-tRNA synthetase family.

The protein resides in the cytoplasm. The enzyme catalyses tRNA(Gly) + glycine + ATP = glycyl-tRNA(Gly) + AMP + diphosphate. The polypeptide is Glycine--tRNA ligase (glyQS) (Chlamydia muridarum (strain MoPn / Nigg)).